A 92-amino-acid chain; its full sequence is MTRSLKKNPFVANHLLKKIEKLNTKAEKEIIVTWSRASTIIPTMIGHTIAIHNGKEHLPIYITDSMVGHKLGEFAPTLNFRGHAKSDNRSRR.

The protein belongs to the universal ribosomal protein uS19 family.

It localises to the plastid. It is found in the chloroplast. Its function is as follows. Protein S19 forms a complex with S13 that binds strongly to the 16S ribosomal RNA. This Nicotiana tomentosiformis (Tobacco) protein is Small ribosomal subunit protein uS19c.